Here is a 252-residue protein sequence, read N- to C-terminus: 1-(5-phosphoribosyl)-5-[(5-phosphoribosylamino)methylideneamino] imidazole-4-carboxamide isomerase (252 aa).

D10 functions as the Proton acceptor in the catalytic mechanism. The Proton donor role is filled by D129.

It belongs to the HisA/HisF family.

It localises to the cytoplasm. The catalysed reaction is 1-(5-phospho-beta-D-ribosyl)-5-[(5-phospho-beta-D-ribosylamino)methylideneamino]imidazole-4-carboxamide = 5-[(5-phospho-1-deoxy-D-ribulos-1-ylimino)methylamino]-1-(5-phospho-beta-D-ribosyl)imidazole-4-carboxamide. Its pathway is amino-acid biosynthesis; L-histidine biosynthesis; L-histidine from 5-phospho-alpha-D-ribose 1-diphosphate: step 4/9. The polypeptide is 1-(5-phosphoribosyl)-5-[(5-phosphoribosylamino)methylideneamino] imidazole-4-carboxamide isomerase (Frankia casuarinae (strain DSM 45818 / CECT 9043 / HFP020203 / CcI3)).